Consider the following 158-residue polypeptide: G-protein-signaling modulator 3 (158 aa).

The disordered stretch occupies residues 1–53 (MEAERPQEDGEQSLPQDDQGWPPVNSTARPWRSAPPSPPPPGTRHTALGPRSG). 2 positions are modified to phosphoserine: S33 and S37. Pro residues predominate over residues 33–42 (SAPPSPPPPG). Low complexity predominate over residues 43 to 53 (TRHTALGPRSG). Phosphoserine occurs at positions 54 and 57. The residue at position 60 (T60) is a Phosphothreonine. Residues 60-82 (TELLLDLVAEAQSRRLEEQRAAF) form the GoLoco 1 domain. The tract at residues 78–97 (QRAAFHTPKVPPSLAPTPPR) is disordered. Over residues 86–96 (KVPPSLAPTPP) the composition is skewed to pro residues. 2 GoLoco domains span residues 102–124 (KEQL…RSDP) and 130–153 (GQEL…RSRP).

Its subcellular location is the cytoplasm. Interacts with subunit of G(i) alpha proteins and regulates the activation of G(i) alpha proteins. The polypeptide is G-protein-signaling modulator 3 (Gpsm3) (Rattus norvegicus (Rat)).